The sequence spans 427 residues: Heterogeneous nuclear ribonucleoprotein K (427 aa).

Positions 1–34 (METEQQEETFTNTETNGKRPAEDMEEEQAFKRSR) are disordered. Positions 16-34 (NGKRPAEDMEEEQAFKRSR) are enriched in basic and acidic residues. KH domains follow at residues 39–101 (MVEL…LKKI) and 117–182 (DCEL…IKII). 2 repeat units span residues 51–73 (AGAV…NASV) and 56–59 (GKGG). The 2 X 22 AA approximate repeats stretch occupies residues 51–385 (AGAVIGKGGK…QIRHESGASI (335 aa)). Positions 56–371 (GKGGKNIKAL…LAGSIIGKGG (316 aa)) are 5 X 4 AA repeats of G-X-G-G. Residues 209 to 246 (YGGFTMMFDDRRGRPVGFPMRGRGGFDRMPPNRGGRPM) form an RNA-binding RGG-box region. Tandem repeats lie at residues 218 to 223 (DRRGRP), 230 to 233 (GRGG), and 240 to 243 (NRGG). Residues 218–302 (DRRGRPVGFP…LMSYDRRGRP (85 aa)) are 2 X 6 AA approximate repeats. Positions 221-305 (GRPVGFPMRG…YDRRGRPGDR (85 aa)) are disordered. Residues 249-258 (SRRDYDDMSP) are compositionally biased toward basic and acidic residues. 4 consecutive repeat copies span residues 268–271 (GRGG), 297–302 (DRRGRP), 363–385 (AGSI…GASI), and 368–371 (GKGG). Over residues 295–305 (SYDRRGRPGDR) the composition is skewed to basic and acidic residues. One can recognise a KH 3 domain in the interval 351–415 (IITTQVTIPK…DQIQNAQYLL (65 aa)).

It localises to the cytoplasm. It is found in the nucleus. Its subcellular location is the nucleoplasm. In terms of biological role, one of the major pre-mRNA-binding proteins. Binds tenaciously to poly(C) sequences. Likely to play a role in the nuclear metabolism of hnRNAs, particularly for pre-mRNAs that contain cytidine-rich sequences. Can also bind poly(C) single-stranded DNA. May play an important role in p53/TP53 response to DNA damage, acting at the level of both transcription activation and repression. As part of a ribonucleoprotein complex, may negatively regulate the transcription of genes involved in neuronal differentiation. This Gallus gallus (Chicken) protein is Heterogeneous nuclear ribonucleoprotein K (HNRNPK).